Consider the following 413-residue polypeptide: Chemotactic signal transduction system substrate-binding protein BasB (413 aa).

The signal sequence occupies residues 1–31 (MHSTTRREWLGAIGATAATGLAGCAGVGGAG).

The protein localises to the cell membrane. Functionally, mediates chemotaxis towards five attractant amino acids (leucine, isoleucine, valine, methionine and cysteine). May function as a receptor that binds the amino acids and transduces a signal to BasT. Has probably no additional role in transport. This Halobacterium salinarum (strain ATCC 29341 / DSM 671 / R1) protein is Chemotactic signal transduction system substrate-binding protein BasB (basB).